The chain runs to 393 residues: Probable alpha-1,6-mannosyltransferase MNN10 (393 aa).

Over 1–52 (MSSVPYNSQLPISNHLEYDEDEKKSRGSKLGLKYKMIYWRKTLCSSLARWRK) the chain is Cytoplasmic. A helical; Signal-anchor for type II membrane protein transmembrane segment spans residues 53–73 (LILLISLALFLFIWISDSTIS). The Lumenal segment spans residues 74 to 393 (RNPSTTSFQG…RKWYTRFFFP (320 aa)). A disordered region spans residues 77–97 (STTSFQGQNSNDNKLSNTGSS).

This sequence belongs to the glycosyltransferase 34 family. In terms of assembly, component of the M-Pol II complex composed of ANP1, MNN9, MNN10, MNN11 and HOC1.

It localises to the endoplasmic reticulum membrane. It is found in the golgi apparatus. The protein localises to the cis-Golgi network membrane. Its function is as follows. Required for polarized growth and efficient budding. The M-Pol II complex possesses alpha-1,6-mannosyltransferase activity and is probably involved in the elongation of the mannan backbone of N-linked glycans on cell wall and periplasmic proteins. This chain is Probable alpha-1,6-mannosyltransferase MNN10 (MNN10), found in Saccharomyces cerevisiae (strain ATCC 204508 / S288c) (Baker's yeast).